A 396-amino-acid chain; its full sequence is Small ribosomal subunit protein mS27 (396 aa).

This sequence belongs to the mitochondrion-specific ribosomal protein mS27 family. As to quaternary structure, component of the mitochondrial small ribosomal subunit (mt-SSU). Mature N.crassa 74S mitochondrial ribosomes consist of a small (37S) and a large (54S) subunit. The 37S small subunit contains a 16S ribosomal RNA (16S mt-rRNA) and 32 different proteins. The 54S large subunit contains a 23S rRNA (23S mt-rRNA) and 42 different proteins.

It is found in the mitochondrion. In terms of biological role, component of the mitochondrial ribosome (mitoribosome), a dedicated translation machinery responsible for the synthesis of mitochondrial genome-encoded proteins, including at least some of the essential transmembrane subunits of the mitochondrial respiratory chain. The mitoribosomes are attached to the mitochondrial inner membrane and translation products are cotranslationally integrated into the membrane. This is Small ribosomal subunit protein mS27 (mrp13) from Neurospora crassa (strain ATCC 24698 / 74-OR23-1A / CBS 708.71 / DSM 1257 / FGSC 987).